The following is a 548-amino-acid chain: Glucose-6-phosphate isomerase (548 aa).

The Proton donor role is filled by glutamate 354. Catalysis depends on residues histidine 385 and lysine 513.

Belongs to the GPI family.

It localises to the cytoplasm. The enzyme catalyses alpha-D-glucose 6-phosphate = beta-D-fructose 6-phosphate. Its pathway is carbohydrate biosynthesis; gluconeogenesis. The protein operates within carbohydrate degradation; glycolysis; D-glyceraldehyde 3-phosphate and glycerone phosphate from D-glucose: step 2/4. Catalyzes the reversible isomerization of glucose-6-phosphate to fructose-6-phosphate. This is Glucose-6-phosphate isomerase from Marinomonas sp. (strain MWYL1).